Here is a 76-residue protein sequence, read N- to C-terminus: Large ribosomal subunit protein bL31 (76 aa).

Positions 16, 18, 38, and 41 each coordinate Zn(2+).

The protein belongs to the bacterial ribosomal protein bL31 family. Type A subfamily. Part of the 50S ribosomal subunit. Zn(2+) is required as a cofactor.

Binds the 23S rRNA. In Nocardia farcinica (strain IFM 10152), this protein is Large ribosomal subunit protein bL31.